We begin with the raw amino-acid sequence, 94 residues long: Cell division topological specificity factor (94 aa).

It belongs to the MinE family.

In terms of biological role, prevents the cell division inhibition by proteins MinC and MinD at internal division sites while permitting inhibition at polar sites. This ensures cell division at the proper site by restricting the formation of a division septum at the midpoint of the long axis of the cell. This Clostridioides difficile (strain 630) (Peptoclostridium difficile) protein is Cell division topological specificity factor.